The primary structure comprises 446 residues: MSQKTLFTKSALAVAVALISTQAWSAGFQLNEFSSSGLGRAYSGEGAIADDAGNVSRNPALITMFDRPTFSAGAVYIDPDVNISGTSPSGRSLKADNIAPTAWVPNMHFVAPINDQFGWGASITSNYGLATEFNDTYAGGSVGGTTDLETMNLNLSGAYRLNNAWSFGLGFNAVYARAKIERFAGDLGQLVAGQIMQSPAGQTQQGQALAATANGIDSNTKIAHLNGNQWGFGWNAGILYELDKNNRYALTYRSEVKIDFKGNYSSDLNRAFNNYGLPIPTATGGATQSGYLTLNLPEMWEVSGYNRVDPQWAIHYSLAYTSWSQFQQLKATSTSGDTLFQKHEGFKDAYRIALGTTYYYDDNWTFRTGIAFDDSPVPAQNRSISIPDQDRFWLSAGTTYAFNKDASVDVGVSYMHGQSVKINEGPYQFESEGKAWLFGTNFNYAF.

An N-terminal signal peptide occupies residues 1–25 (MSQKTLFTKSALAVAVALISTQAWS).

Belongs to the OmpP1/FadL family. In terms of assembly, has been isolated from outer membrane preparation as a homodimer.

The protein localises to the cell outer membrane. Involved in translocation of long-chain fatty acids across the outer membrane. It is a receptor for the bacteriophage T2. FadL may form a specific channel. The protein is Long-chain fatty acid transport protein (fadL) of Escherichia coli (strain K12).